A 268-amino-acid polypeptide reads, in one-letter code: MNSNYLLLPHFDPSIFTLGDSNIGLRWYGLMYLLGFVFARWLAVRRANRPNSGWTVDQVDTLLFNGFMGVFIGGRVGDVFFYNLDHFLQEPLYLFRVWEGGMSFHGGLIGVIVAMIWTSYSQKRNFWQTADFVAPLIPFGLGLGRIGNFINLELWGRETNVPWAMIFPNDPLLLPRHPSQLYEAFLEGLVLFAILNIFIKKPRPMASVAGLFLIGYGVFRFIVEYVREPEVENFFGIITRGQALCLPMIIGGAFIMAWAYSRKSAVIK.

The next 7 helical transmembrane spans lie at 23–43 (IGLRWYGLMYLLGFVFARWLA), 62–82 (LLFNGFMGVFIGGRVGDVFFY), 97–117 (VWEGGMSFHGGLIGVIVAMIW), 132–152 (FVAPLIPFGLGLGRIGNFINL), 179–199 (SQLYEAFLEGLVLFAILNIFI), 206–226 (ASVAGLFLIGYGVFRFIVEYV), and 241–261 (GQALCLPMIIGGAFIMAWAYS). Arg-145 serves as a coordination point for a 1,2-diacyl-sn-glycero-3-phospho-(1'-sn-glycerol).

This sequence belongs to the Lgt family.

The protein resides in the cell inner membrane. The enzyme catalyses L-cysteinyl-[prolipoprotein] + a 1,2-diacyl-sn-glycero-3-phospho-(1'-sn-glycerol) = an S-1,2-diacyl-sn-glyceryl-L-cysteinyl-[prolipoprotein] + sn-glycerol 1-phosphate + H(+). Its pathway is protein modification; lipoprotein biosynthesis (diacylglyceryl transfer). Its function is as follows. Catalyzes the transfer of the diacylglyceryl group from phosphatidylglycerol to the sulfhydryl group of the N-terminal cysteine of a prolipoprotein, the first step in the formation of mature lipoproteins. This Haemophilus influenzae (strain 86-028NP) protein is Phosphatidylglycerol--prolipoprotein diacylglyceryl transferase.